The chain runs to 404 residues: Probable tRNA sulfurtransferase (404 aa).

The THUMP domain occupies 60 to 165 (RSVIEALKPV…DEAAYLSHED (106 aa)). ATP is bound by residues 183–184 (ML), 208–209 (HF), R265, G287, and Q296.

Belongs to the ThiI family.

It is found in the cytoplasm. It carries out the reaction [ThiI sulfur-carrier protein]-S-sulfanyl-L-cysteine + a uridine in tRNA + 2 reduced [2Fe-2S]-[ferredoxin] + ATP + H(+) = [ThiI sulfur-carrier protein]-L-cysteine + a 4-thiouridine in tRNA + 2 oxidized [2Fe-2S]-[ferredoxin] + AMP + diphosphate. The enzyme catalyses [ThiS sulfur-carrier protein]-C-terminal Gly-Gly-AMP + S-sulfanyl-L-cysteinyl-[cysteine desulfurase] + AH2 = [ThiS sulfur-carrier protein]-C-terminal-Gly-aminoethanethioate + L-cysteinyl-[cysteine desulfurase] + A + AMP + 2 H(+). It participates in cofactor biosynthesis; thiamine diphosphate biosynthesis. Catalyzes the ATP-dependent transfer of a sulfur to tRNA to produce 4-thiouridine in position 8 of tRNAs, which functions as a near-UV photosensor. Also catalyzes the transfer of sulfur to the sulfur carrier protein ThiS, forming ThiS-thiocarboxylate. This is a step in the synthesis of thiazole, in the thiamine biosynthesis pathway. The sulfur is donated as persulfide by IscS. This Streptococcus equi subsp. equi (strain 4047) protein is Probable tRNA sulfurtransferase.